The primary structure comprises 624 residues: Actin-related protein 8 (624 aa).

At Met1 the chain carries N-acetylmethionine. Residues 1 to 25 show a composition bias toward basic and acidic residues; sequence MTQAEKGDTENGKEKGGEKEKEQRG. A disordered region spans residues 1 to 29; the sequence is MTQAEKGDTENGKEKGGEKEKEQRGVKRP. ATP contacts are provided by Ser55 and Thr56. Ser132 carries the post-translational modification Phosphoserine. 283 to 286 is an ATP binding site; it reads DVGD. The residue at position 412 (Ser412) is a Phosphoserine. The disordered stretch occupies residues 430–462; that stretch reads SKQEQSAKATADRKSASKPIGFEGDLRGQSSDL.

It belongs to the actin family. ARP8 subfamily. In terms of assembly, component of the chromatin remodeling INO80 complex; specifically part of a complex module associated with the DBINO domain of INO80. Interacts with ACTR5; the interaction is observed in asynchronous (interphase) cells but not in metaphase-arrested cells indicative for a possible dissociation of the INO80 complex in mitotic cells. Exists as monomers and dimers, but the dimer is most probably the biologically relevant form required for stable interactions with histones that exploits the twofold symmetry of the nucleosome core.

It is found in the nucleus. The protein resides in the chromosome. In terms of biological role, plays an important role in the functional organization of mitotic chromosomes. Exhibits low basal ATPase activity, and unable to polymerize. Its function is as follows. Proposed core component of the chromatin remodeling INO80 complex which is involved in transcriptional regulation, DNA replication and probably DNA repair. Required for the recruitment of INO80 (and probably the INO80 complex) to sites of DNA damage. Strongly prefer nucleosomes and H3-H4 tetramers over H2A-H2B dimers, suggesting it may act as a nucleosome recognition module within the complex. The chain is Actin-related protein 8 (ACTR8) from Homo sapiens (Human).